A 264-amino-acid polypeptide reads, in one-letter code: Thiazole synthase (264 aa).

K106 functions as the Schiff-base intermediate with DXP in the catalytic mechanism. 1-deoxy-D-xylulose 5-phosphate contacts are provided by residues G167, 193-194, and 215-216; these read AG and NT.

It belongs to the ThiG family. In terms of assembly, homotetramer. Forms heterodimers with either ThiH or ThiS.

It is found in the cytoplasm. The enzyme catalyses [ThiS sulfur-carrier protein]-C-terminal-Gly-aminoethanethioate + 2-iminoacetate + 1-deoxy-D-xylulose 5-phosphate = [ThiS sulfur-carrier protein]-C-terminal Gly-Gly + 2-[(2R,5Z)-2-carboxy-4-methylthiazol-5(2H)-ylidene]ethyl phosphate + 2 H2O + H(+). The protein operates within cofactor biosynthesis; thiamine diphosphate biosynthesis. Its function is as follows. Catalyzes the rearrangement of 1-deoxy-D-xylulose 5-phosphate (DXP) to produce the thiazole phosphate moiety of thiamine. Sulfur is provided by the thiocarboxylate moiety of the carrier protein ThiS. In vitro, sulfur can be provided by H(2)S. This Xylella fastidiosa (strain 9a5c) protein is Thiazole synthase.